The sequence spans 309 residues: Ferrochelatase (309 aa).

Fe cation-binding residues include H185 and E264.

The protein belongs to the ferrochelatase family.

It localises to the cytoplasm. It carries out the reaction heme b + 2 H(+) = protoporphyrin IX + Fe(2+). It participates in porphyrin-containing compound metabolism; protoheme biosynthesis; protoheme from protoporphyrin-IX: step 1/1. In terms of biological role, catalyzes the ferrous insertion into protoporphyrin IX. The sequence is that of Ferrochelatase from Aquifex aeolicus (strain VF5).